The following is a 524-amino-acid chain: 5'-AMP-activated protein kinase subunit gamma-2 (524 aa).

The interval 1 to 178 (MPLLDGDLEG…TRPPLASPTH (178 aa)) is disordered. Phosphoserine is present on residues S21, S27, S29, S46, S94, S99, S117, and S118. Residues 112–123 (TSGLSSSPSTPT) are compositionally biased toward low complexity. T121 is subject to Phosphothreonine. Over residues 135–145 (SYKHEPERLEN) the composition is skewed to basic and acidic residues. The segment covering 148-168 (YASSSPPDTGQRFCPSSFQSP) has biased composition (polar residues). A Phosphoserine modification is found at S152. CBS domains follow at residues 230–290 (PTSS…KSPM), 312–370 (TFKP…MSDM), and 385–447 (IGTY…NLDI). ADP contacts are provided by residues R257, 272-277 (MLTITD), V317, 338-339 (HR), and K357. Residues R257, 272-277 (MLTITD), V317, H338, 338-339 (HR), K357, T387, A392, 413-414 (SA), 429-432 (SKFD), R456, H485, 485-486 (HR), and 501-504 (SLSD) contribute to the AMP site. ATP is bound by residues R257, 272-277 (MLTITD), V317, 338-339 (HR), R339, and K357. The AMPK pseudosubstrate motif lies at 325–346 (LLDAVYSLIKNKIHRLPVIDPI). ADP contacts are provided by residues 429 to 432 (SKFD), R456, and 485 to 486 (HR). ATP-binding positions include 429 to 432 (SKFD), R456, and 485 to 486 (HR). The CBS 4 domain occupies 459-517 (YFEGVVKCNKLEILETIVDRIVRAEVHRLVVANEADSIVGIISLSDILQALILTPAGAK).

Belongs to the 5'-AMP-activated protein kinase gamma subunit family. In terms of assembly, AMPK is a heterotrimer of an alpha catalytic subunit (PRKAA1 or PRKAA2), a beta (PRKAB1 or PRKAB2) and a gamma non-catalytic subunits (PRKAG1, PRKAG2 or PRKAG3). Interacts with FNIP1 and FNIP2. Phosphorylated by ULK1; leading to negatively regulate AMPK activity and suggesting the existence of a regulatory feedback loop between ULK1 and AMPK. Post-translationally, glycosylated; O-GlcNAcylated by OGT, promoting the AMP-activated protein kinase (AMPK) activity.

Its function is as follows. AMP/ATP-binding subunit of AMP-activated protein kinase (AMPK), an energy sensor protein kinase that plays a key role in regulating cellular energy metabolism. In response to reduction of intracellular ATP levels, AMPK activates energy-producing pathways and inhibits energy-consuming processes: inhibits protein, carbohydrate and lipid biosynthesis, as well as cell growth and proliferation. AMPK acts via direct phosphorylation of metabolic enzymes, and by longer-term effects via phosphorylation of transcription regulators. Also acts as a regulator of cellular polarity by remodeling the actin cytoskeleton; probably by indirectly activating myosin. Gamma non-catalytic subunit mediates binding to AMP, ADP and ATP, leading to activate or inhibit AMPK: AMP-binding results in allosteric activation of alpha catalytic subunit (PRKAA1 or PRKAA2) both by inducing phosphorylation and preventing dephosphorylation of catalytic subunits. ADP also stimulates phosphorylation, without stimulating already phosphorylated catalytic subunit. ATP promotes dephosphorylation of catalytic subunit, rendering the AMPK enzyme inactive. In Pongo abelii (Sumatran orangutan), this protein is 5'-AMP-activated protein kinase subunit gamma-2 (PRKAG2).